Consider the following 153-residue polypeptide: MTDNRYDNLGQLGTSTPLPDNPDTAALERVANPCDAPYMTRFVCPEFTSLCPVTGAPDFAHLVIDYVPRDWIVESKSLKLYLGSFRNHGAFHEACTTGIGQRLVKELDPVWLRIGGYWYPRGGIPIDVFFATGEPPKGVWIPDQDVPGYRGRG.

The segment at Met1–Pro22 is disordered. Cys51 (thioimide intermediate) is an active-site residue. Asp58 (proton donor) is an active-site residue. Substrate contacts are provided by residues Val73 to Ser75 and His92 to Glu93.

It belongs to the GTP cyclohydrolase I family. QueF type 1 subfamily.

The protein resides in the cytoplasm. The catalysed reaction is 7-aminomethyl-7-carbaguanine + 2 NADP(+) = 7-cyano-7-deazaguanine + 2 NADPH + 3 H(+). The protein operates within tRNA modification; tRNA-queuosine biosynthesis. Catalyzes the NADPH-dependent reduction of 7-cyano-7-deazaguanine (preQ0) to 7-aminomethyl-7-deazaguanine (preQ1). The chain is NADPH-dependent 7-cyano-7-deazaguanine reductase from Maricaulis maris (strain MCS10) (Caulobacter maris).